The chain runs to 180 residues: Large ribosomal subunit protein uL6 (180 aa).

Belongs to the universal ribosomal protein uL6 family. In terms of assembly, part of the 50S ribosomal subunit.

Its function is as follows. This protein binds to the 23S rRNA, and is important in its secondary structure. It is located near the subunit interface in the base of the L7/L12 stalk, and near the tRNA binding site of the peptidyltransferase center. In Flavobacterium johnsoniae (strain ATCC 17061 / DSM 2064 / JCM 8514 / BCRC 14874 / CCUG 350202 / NBRC 14942 / NCIMB 11054 / UW101) (Cytophaga johnsonae), this protein is Large ribosomal subunit protein uL6.